Here is a 187-residue protein sequence, read N- to C-terminus: Large ribosomal subunit protein uL6 (187 aa).

Belongs to the universal ribosomal protein uL6 family. In terms of assembly, part of the 50S ribosomal subunit.

This protein binds to the 23S rRNA, and is important in its secondary structure. It is located near the subunit interface in the base of the L7/L12 stalk, and near the tRNA binding site of the peptidyltransferase center. The chain is Large ribosomal subunit protein uL6 from Roseiflexus sp. (strain RS-1).